The following is a 97-amino-acid chain: NADH-quinone oxidoreductase subunit K (97 aa).

The next 3 membrane-spanning stretches (helical) occupy residues 1-21 (MSEYLILCSILFSLGAFGVLY), 25-45 (ILVMFMCIELMLNSVNLLMVY), and 57-77 (VFVFFIMAVAAAEITIGLAIL).

This sequence belongs to the complex I subunit 4L family. In terms of assembly, NDH-1 is composed of 14 different subunits. Subunits NuoA, H, J, K, L, M, N constitute the membrane sector of the complex.

The protein localises to the cell inner membrane. It catalyses the reaction a quinone + NADH + 5 H(+)(in) = a quinol + NAD(+) + 4 H(+)(out). Its function is as follows. NDH-1 shuttles electrons from NADH, via FMN and iron-sulfur (Fe-S) centers, to quinones in the respiratory chain. The immediate electron acceptor for the enzyme in this species is believed to be a menaquinone. Couples the redox reaction to proton translocation (for every two electrons transferred, four hydrogen ions are translocated across the cytoplasmic membrane), and thus conserves the redox energy in a proton gradient. This Cytophaga hutchinsonii (strain ATCC 33406 / DSM 1761 / CIP 103989 / NBRC 15051 / NCIMB 9469 / D465) protein is NADH-quinone oxidoreductase subunit K.